A 146-amino-acid chain; its full sequence is Hemoglobin subunit beta (146 aa).

At V1 the chain carries N-acetylvaline. The region spanning 2 to 146 is the Globin domain; it reads HLTADEKTAV…VANALAHKYH (145 aa). The residue at position 12 (T12) is a Phosphothreonine. At S44 the chain carries Phosphoserine. K59 carries the N6-acetyllysine modification. H63 contributes to the heme b binding site. K82 carries the N6-acetyllysine modification. A heme b-binding site is contributed by H92. Residue C93 is modified to S-nitrosocysteine. Position 144 is an N6-acetyllysine (K144).

Belongs to the globin family. As to quaternary structure, heterotetramer of two alpha chains and two beta chains. In terms of tissue distribution, red blood cells.

Its function is as follows. Involved in oxygen transport from the lung to the various peripheral tissues. This is Hemoglobin subunit beta (HBB) from Procyon lotor (Raccoon).